The following is a 513-amino-acid chain: Ankyrin repeat domain-containing protein 13C-B (513 aa).

Positions 1 to 19 (MTGEKIRSLHRDQKPSKDE) are enriched in basic and acidic residues. 2 disordered regions span residues 1–34 (MTGE…DGTF) and 55–77 (PSNP…PMTP). The segment covering 20-29 (DLLEPDEEAT) has biased composition (acidic residues). 3 ANK repeats span residues 83–114 (DVYF…QKDN), 115–144 (HGNT…PVKV), and 148–177 (QGWS…QQSR).

Its subcellular location is the endoplasmic reticulum membrane. Its function is as follows. Acts as a molecular chaperone for G protein-coupled receptors, regulating their biogenesis and exit from the ER. This chain is Ankyrin repeat domain-containing protein 13C-B (ankrd13c-b), found in Xenopus laevis (African clawed frog).